Consider the following 284-residue polypeptide: Tropomyosin (284 aa).

The stretch at 1–284 forms a coiled coil; the sequence is MEAIKKKMQA…DQTFAELTGY (284 aa).

Belongs to the tropomyosin family. As to quaternary structure, homodimer.

Its function is as follows. Tropomyosin, in association with the troponin complex, plays a central role in the calcium dependent regulation of muscle contraction. This is Tropomyosin from Dermatophagoides farinae (American house dust mite).